A 521-amino-acid chain; its full sequence is Pentatricopeptide repeat-containing protein At4g26680, mitochondrial (521 aa).

The N-terminal 38 residues, 1–38, are a transit peptide targeting the mitochondrion; sequence MIRISIGVNRRLRYQFSSFAGYSGSENPRLFKTLGAAN. PPR repeat units lie at residues 167-201, 202-236, 237-271, 272-306, 307-341, 342-376, 377-411, 412-446, 447-481, and 482-516; these read TPRVFDSLFKTFAHLKKFRNATDTFMQMKDYGFLP, TVESCNAYMSSLLGQGRVDIALRFYREMRRCKISP, NPYTLNMVMSGYCRSGKLDKGIELLQDMERLGFRA, TDVSYNTLIAGHCEKGLLSSALKLKNMMGKSGLQP, NVVTFNTLIHGFCRAMKLQEASKVFGEMKAVNVAP, NTVTYNTLINGYSQQGDHEMAFRFYEDMVCNGIQR, DILTYNALIFGLCKQAKTRKAAQFVKELDKENLVP, NSSTFSALIMGQCVRKNADRGFELYKSMIRSGCHP, NEQTFNMLVSAFCRNEDFDGASQVLREMVRRSIPL, and DSRTVHQVCNGLKHQGKDQLVKKLLQEMEGKKFLQ.

Belongs to the PPR family. P subfamily.

The protein localises to the mitochondrion. In Arabidopsis thaliana (Mouse-ear cress), this protein is Pentatricopeptide repeat-containing protein At4g26680, mitochondrial.